The chain runs to 657 residues: 1-deoxy-D-xylulose-5-phosphate synthase (657 aa).

Thiamine diphosphate contacts are provided by residues His-73 and 113-115 (SHA). Position 145 (Asp-145) interacts with Mg(2+). Residues 146 to 147 (GA), Asn-175, Tyr-293, and Glu-375 contribute to the thiamine diphosphate site. Asn-175 provides a ligand contact to Mg(2+).

The protein belongs to the transketolase family. DXPS subfamily. In terms of assembly, homodimer. Requires Mg(2+) as cofactor. Thiamine diphosphate serves as cofactor.

The catalysed reaction is D-glyceraldehyde 3-phosphate + pyruvate + H(+) = 1-deoxy-D-xylulose 5-phosphate + CO2. It functions in the pathway metabolic intermediate biosynthesis; 1-deoxy-D-xylulose 5-phosphate biosynthesis; 1-deoxy-D-xylulose 5-phosphate from D-glyceraldehyde 3-phosphate and pyruvate: step 1/1. Its function is as follows. Catalyzes the acyloin condensation reaction between C atoms 2 and 3 of pyruvate and glyceraldehyde 3-phosphate to yield 1-deoxy-D-xylulose-5-phosphate (DXP). In Paenarthrobacter aurescens (strain TC1), this protein is 1-deoxy-D-xylulose-5-phosphate synthase.